A 441-amino-acid chain; its full sequence is Monodehydroascorbate reductase 3 (441 aa).

FAD contacts are provided by residues 14 to 17 (GGVA), glutamate 41, arginine 48, lysine 53, isoleucine 96, and 147 to 148 (RE). NAD(+)-binding positions include 173–179 (GGFLGLE), glutamate 197, arginine 203, and glycine 262. 175–179 (FLGLE) is an NADP(+) binding site. NADP(+)-binding residues include arginine 203 and glycine 262. Residue aspartate 299 coordinates FAD. 315–316 (EH) is an NAD(+) binding site. 315-316 (EH) contributes to the NADP(+) binding site. Arginine 321 is an L-ascorbate binding site. Residue tyrosine 350 participates in FAD binding. Tyrosine 350 is a binding site for NAD(+). Tyrosine 350 contributes to the NADP(+) binding site. Arginine 352 contacts L-ascorbate. The residue at position 418 (serine 418) is a Phosphoserine.

Belongs to the FAD-dependent oxidoreductase family. It depends on FAD as a cofactor.

Its subcellular location is the cytoplasm. The enzyme catalyses 2 monodehydro-L-ascorbate radical + NADH + H(+) = 2 L-ascorbate + NAD(+). Catalyzes the conversion of monodehydroascorbate to ascorbate, oxidizing NADH in the process. Required for producing sufficient ascorbate to maintain the interaction between Piriformospora indica and Arabidopsis in a mutualistic state. This Arabidopsis thaliana (Mouse-ear cress) protein is Monodehydroascorbate reductase 3.